Reading from the N-terminus, the 238-residue chain is MKLSLSVALSLAASTAQAATQFCDQWGSVTEGNYILYNNLWGQAQATSGSQCTTFESLSGNTIVWNTKWSWSGGQGQVKSFANAALQFTPKKLSSVKSIDSTWKWNYSGSNIVADVAYDMFLSTSPGGDHNYEIMVWLGALGGAGPISSTGSPIATPTVAGIKFNLYLGPNGSMQVYSFVAQSTTNSFSGDMRDFFTYLESNQGLSSDLYLVDVQAGTEPFSGSNAVFTVSDYSVSVA.

Positions 1-18 (MKLSLSVALSLAASTAQA) are cleaved as a signal peptide. 2 N-linked (GlcNAc...) asparagine glycosylation sites follow: Asn-106 and Asn-171.

It belongs to the glycosyl hydrolase 12 (cellulase H) family.

It is found in the secreted. It catalyses the reaction xyloglucan + H2O = xyloglucan oligosaccharides.. Catalyzes endohydrolysis of 1,4-beta-D-glucosidic linkages in xyloglucan with retention of the beta-configuration of the glycosyl residues. Specific for xyloglucan and does not hydrolyze other cell wall components. The protein is Probable xyloglucan-specific endo-beta-1,4-glucanase A (xgeA) of Aspergillus fumigatus (strain ATCC MYA-4609 / CBS 101355 / FGSC A1100 / Af293) (Neosartorya fumigata).